Consider the following 385-residue polypeptide: Putative mitochondrial carrier protein TRV_02148.2 (385 aa).

Solcar repeat units lie at residues 24–124 (SNTL…LHAR) and 130–210 (RTAG…LRRR). The next 5 helical transmembrane spans lie at 30-47 (GTAIALSTALLHPLDSIL), 132-150 (AGNELLLSLVSMAFVKLFT), 184-207 (WSAYGATLVLCVRSCVLPVVYLAL), 263-279 (YTICVLMVCLGLLLEVI), and 294-310 (VVTVAMMRLSAVMLYML).

The protein belongs to the mitochondrial carrier (TC 2.A.29) family.

It localises to the mitochondrion inner membrane. Functionally, may function as a mitochondrial transporter. This chain is Putative mitochondrial carrier protein TRV_02148.2, found in Trichophyton verrucosum (strain HKI 0517).